A 460-amino-acid polypeptide reads, in one-letter code: Ammonium transporter Rh type C (460 aa).

Residues 1–9 (MAWNTNLRW) are Cytoplasmic-facing. The helical transmembrane segment at 10 to 30 (RLPLTCLLLQVIMVILFGVFV) threads the bilayer. The Extracellular segment spans residues 31–61 (RYDPDADAHWIDERLGRNISSDMDNEFYYRY). Residue asparagine 48 is glycosylated (N-linked (GlcNAc...) asparagine). A helical transmembrane segment spans residues 62 to 82 (PSFQDVHVMIFVGFGFLMTFL). Residues 83 to 86 (QRYG) are Cytoplasmic-facing. A helical membrane pass occupies residues 87-107 (FSSVGFNFLLAAFGIQWALLM). Over 108-125 (QGWLHSFHSGYIVLGVEN) the chain is Extracellular. The chain crosses the membrane as a helical span at residues 126 to 145 (LINADFCVGSVCVAFGAVLG). Residues 146–151 (KVSPVQ) are Cytoplasmic-facing. A helical membrane pass occupies residues 152 to 174 (LLIMTLFQVTLFSVNEFILLNLL). Residues 175-179 (EVKDA) are Extracellular-facing. Residues 180–200 (GGSMTIHTFGAYFGLTVTWIL) form a helical membrane-spanning segment. Over 201–219 (YRPNLYQSKERQSSVYHSD) the chain is Cytoplasmic. A helical membrane pass occupies residues 220 to 240 (LFAMIGTLFLWMYWPSFNSAV). At 241–251 (SHHGDAQHRAA) the chain is on the extracellular side. A helical transmembrane segment spans residues 252-272 (INTYCSLAACVLTSVALSSAL). Over 273 to 285 (HKKGKLDMVHIQN) the chain is Cytoplasmic. The helical transmembrane segment at 286–306 (ATLAGGVAVGTAAEMMLMPYG) threads the bilayer. Serine 307 is a topological domain (extracellular). A helical transmembrane segment spans residues 308-328 (LIVGFICGIISTLGFVYLTPF). Residues 329–340 (LESRLRIQDTCG) lie on the Cytoplasmic side of the membrane. Residues 341–361 (IHNLHGMPGIIGGIVGAVTAA) traverse the membrane as a helical segment. Topologically, residues 362–396 (SANTQQYGQKGLAHAFDIDATKTTWTASMQGSFQA) are extracellular. Residues 397–417 (AGLFVSLAMALVGGLIVGVIL) form a helical membrane-spanning segment. Over 418-460 (KLPFWGQPADENCFEDAIYWEIPEDQKSLVSRSEDPTLRPTEP) the chain is Cytoplasmic.

This sequence belongs to the ammonium transporter (TC 2.A.49) family. Rh subfamily. Homotrimer. Post-translationally, N-glycosylated.

It is found in the cell membrane. It localises to the apical cell membrane. The enzyme catalyses NH4(+)(in) = NH4(+)(out). It carries out the reaction methylamine(out) = methylamine(in). The catalysed reaction is CO2(out) = CO2(in). Ammonium transporter involved in the maintenance of acid-base homeostasis. Transports ammonium and its related derivative methylammonium across the plasma membrane of epithelial cells likely contributing to renal transepithelial ammonia transport and ammonia metabolism. Postulated to primarily mediate an electroneutral bidirectional transport of NH3 ammonia species according to a mechanism that implies interaction of an NH4(+) ion with acidic residues of the pore entry followed by dissociation of NH4(+) into NH3 and H(+). As a result NH3 transits through the central pore and is protonated on the extracellular side reforming NH4(+). May act as a CO2 channel providing for renal acid secretion. This chain is Ammonium transporter Rh type C (RHCG), found in Sus scrofa (Pig).